A 619-amino-acid polypeptide reads, in one-letter code: ATP-dependent RNA helicase dbp9 (619 aa).

The tract at residues 1–30 (MKRKLDANDVPSTEVAEEKETKDADNTDFE) is disordered. The segment covering 16-25 (AEEKETKDAD) has biased composition (basic and acidic residues). The short motif at 27-55 (TDFESLNLDPRLRQALIREQFTKPTPVQS) is the Q motif element. The region spanning 58-236 (IPLALEGKDI…GLFCRSPVIL (179 aa)) is the Helicase ATP-binding domain. 71–78 (AKTGSGKT) is a binding site for ATP. Residues 184–187 (DEAD) carry the DEAD box motif. Positions 247–484 (GISQFVVRCA…EVKPYHFEMK (238 aa)) constitute a Helicase C-terminal domain. Disordered regions lie at residues 339 to 390 (SRTS…GKAK) and 582 to 619 (GDNR…RGRK). Basic and acidic residues predominate over residues 345–362 (KSKEATDGDDEAKDKMGS). A compositionally biased stretch (basic residues) spans 587–604 (RKAREKNRGKGKGRKPSG).

Belongs to the DEAD box helicase family. DDX56/DBP9 subfamily.

It localises to the nucleus. Its subcellular location is the nucleolus. It catalyses the reaction ATP + H2O = ADP + phosphate + H(+). In terms of biological role, ATP-binding RNA helicase involved in the biogenesis of 60S ribosomal subunits and is required for the normal formation of 25S and 5.8S rRNAs. The polypeptide is ATP-dependent RNA helicase dbp9 (dbp9) (Neosartorya fischeri (strain ATCC 1020 / DSM 3700 / CBS 544.65 / FGSC A1164 / JCM 1740 / NRRL 181 / WB 181) (Aspergillus fischerianus)).